Consider the following 323-residue polypeptide: tRNA U34 carboxymethyltransferase (323 aa).

Residues K91, W105, K110, G130, 180–181, M196, Y200, and R315 contribute to the carboxy-S-adenosyl-L-methionine site; that span reads IE.

It belongs to the class I-like SAM-binding methyltransferase superfamily. CmoB family. Homotetramer.

It catalyses the reaction carboxy-S-adenosyl-L-methionine + 5-hydroxyuridine(34) in tRNA = 5-carboxymethoxyuridine(34) in tRNA + S-adenosyl-L-homocysteine + H(+). In terms of biological role, catalyzes carboxymethyl transfer from carboxy-S-adenosyl-L-methionine (Cx-SAM) to 5-hydroxyuridine (ho5U) to form 5-carboxymethoxyuridine (cmo5U) at position 34 in tRNAs. This is tRNA U34 carboxymethyltransferase from Geobacter sp. (strain M21).